Reading from the N-terminus, the 200-residue chain is Transcriptional repressor NrdR (200 aa).

A zinc finger lies at 3–34 (CPRCGKQEIRVLESRSAEGGQSVRRRRECMSC). Residues 49-139 (IMVIKRDGSR…VYRKFQGIKD (91 aa)) form the ATP-cone domain. Residues 158–200 (LERPLRNSPPSESESTASPDWVGGIPQLLDQNDTSSNLSEIPK) are disordered. Polar residues predominate over residues 186 to 200 (LDQNDTSSNLSEIPK).

This sequence belongs to the NrdR family. Zn(2+) is required as a cofactor.

Negatively regulates transcription of bacterial ribonucleotide reductase nrd genes and operons by binding to NrdR-boxes. The chain is Transcriptional repressor NrdR from Synechococcus sp. (strain JA-3-3Ab) (Cyanobacteria bacterium Yellowstone A-Prime).